The chain runs to 194 residues: 23 kDa U4/U6.U5 small nuclear ribonucleoprotein component (194 aa).

The C2H2-type zinc finger occupies 80-104 (FYCDICNLTFKDTLQYIDHLNHKVH).

In terms of assembly, component of the U4/U6-U5 tri-snRNP complex composed of the U4, U6 and U5 snRNAs and at least PRP3, PRP4, PRP6, PRP8, PRP18, PRP31, PRP38, SNU13, SNU23, SNU66, SNU114, SPP381, SMB1, SMD1, SMD2, SMD3, SMX2, SMX3, LSM2, LSM3, LSM4, LSM5, LSM6, LSM7, LSM8, BRR2 and DIB1.

The protein localises to the nucleus. Its function is as follows. Participates in pre-mRNA splicing. Part of the U4/U5/U6 tri-snRNP complex, one of the building blocks of the spliceosome. The chain is 23 kDa U4/U6.U5 small nuclear ribonucleoprotein component (SNU23) from Saccharomyces cerevisiae (strain ATCC 204508 / S288c) (Baker's yeast).